A 697-amino-acid polypeptide reads, in one-letter code: Phosphate acetyltransferase (697 aa).

The phosphate acetyltransferase stretch occupies residues 366 to 697; sequence MFEHKLLEQA…QSPTEKASAQ (332 aa).

The protein in the N-terminal section; belongs to the CobB/CobQ family. It in the C-terminal section; belongs to the phosphate acetyltransferase and butyryltransferase family. As to quaternary structure, homohexamer.

The protein localises to the cytoplasm. The enzyme catalyses acetyl-CoA + phosphate = acetyl phosphate + CoA. The protein operates within metabolic intermediate biosynthesis; acetyl-CoA biosynthesis; acetyl-CoA from acetate: step 2/2. In terms of biological role, involved in acetate metabolism. This Streptomyces coelicolor (strain ATCC BAA-471 / A3(2) / M145) protein is Phosphate acetyltransferase (pta).